Here is a 296-residue protein sequence, read N- to C-terminus: Pantothenate synthetase (296 aa).

31–38 (MGYLHEGH) contacts ATP. Histidine 38 acts as the Proton donor in catalysis. Position 62 (glutamine 62) interacts with (R)-pantoate. Residue glutamine 62 coordinates beta-alanine. ATP is bound at residue 148-151 (GEKD). Glutamine 154 lines the (R)-pantoate pocket. ATP contacts are provided by residues valine 177 and 185–188 (LSSR).

This sequence belongs to the pantothenate synthetase family. As to quaternary structure, homodimer.

Its subcellular location is the cytoplasm. It carries out the reaction (R)-pantoate + beta-alanine + ATP = (R)-pantothenate + AMP + diphosphate + H(+). The protein operates within cofactor biosynthesis; (R)-pantothenate biosynthesis; (R)-pantothenate from (R)-pantoate and beta-alanine: step 1/1. In terms of biological role, catalyzes the condensation of pantoate with beta-alanine in an ATP-dependent reaction via a pantoyl-adenylate intermediate. The sequence is that of Pantothenate synthetase from Deinococcus geothermalis (strain DSM 11300 / CIP 105573 / AG-3a).